The primary structure comprises 340 residues: DNA-directed RNA polymerase subunit alpha (340 aa).

The tract at residues 1-236 is alpha N-terminal domain (alpha-NTD); sequence MLSLSKNWNT…EQLQLFISFE (236 aa). Residues 246 to 340 are alpha C-terminal domain (alpha-CTD); it reads TDALPFSPYL…LSNRYEDSYN (95 aa).

This sequence belongs to the RNA polymerase alpha chain family. As to quaternary structure, homodimer. The RNAP catalytic core consists of 2 alpha, 1 beta, 1 beta' and 1 omega subunit. When a sigma factor is associated with the core the holoenzyme is formed, which can initiate transcription.

It carries out the reaction RNA(n) + a ribonucleoside 5'-triphosphate = RNA(n+1) + diphosphate. DNA-dependent RNA polymerase catalyzes the transcription of DNA into RNA using the four ribonucleoside triphosphates as substrates. In Rickettsia felis (strain ATCC VR-1525 / URRWXCal2) (Rickettsia azadi), this protein is DNA-directed RNA polymerase subunit alpha.